Reading from the N-terminus, the 303-residue chain is Bifunctional protein FolD (303 aa).

Residues 175–177 and Ile-243 each bind NADP(+); that span reads GVS.

This sequence belongs to the tetrahydrofolate dehydrogenase/cyclohydrolase family. In terms of assembly, homodimer.

It carries out the reaction (6R)-5,10-methylene-5,6,7,8-tetrahydrofolate + NADP(+) = (6R)-5,10-methenyltetrahydrofolate + NADPH. The enzyme catalyses (6R)-5,10-methenyltetrahydrofolate + H2O = (6R)-10-formyltetrahydrofolate + H(+). It functions in the pathway one-carbon metabolism; tetrahydrofolate interconversion. Its function is as follows. Catalyzes the oxidation of 5,10-methylenetetrahydrofolate to 5,10-methenyltetrahydrofolate and then the hydrolysis of 5,10-methenyltetrahydrofolate to 10-formyltetrahydrofolate. The polypeptide is Bifunctional protein FolD (Xanthomonas euvesicatoria pv. vesicatoria (strain 85-10) (Xanthomonas campestris pv. vesicatoria)).